The primary structure comprises 211 residues: Proteasome subunit beta 2 (211 aa).

Positions 1 to 17 (MVIMGNELQLENKILKG) are cleaved as a propeptide — removed in mature form; by autocatalysis. Residue threonine 18 is the Nucleophile of the active site.

This sequence belongs to the peptidase T1B family. In terms of assembly, the 20S proteasome core is composed of 14 alpha and 14 beta subunits that assemble into four stacked heptameric rings, resulting in a barrel-shaped structure. The two inner rings, each composed of seven catalytic beta subunits, are sandwiched by two outer rings, each composed of seven alpha subunits. The catalytic chamber with the active sites is on the inside of the barrel. Has a gated structure, the ends of the cylinder being occluded by the N-termini of the alpha-subunits. Is capped at one or both ends by the proteasome regulatory ATPase, PAN.

It is found in the cytoplasm. The enzyme catalyses Cleavage of peptide bonds with very broad specificity.. With respect to regulation, the formation of the proteasomal ATPase PAN-20S proteasome complex, via the docking of the C-termini of PAN into the intersubunit pockets in the alpha-rings, triggers opening of the gate for substrate entry. Interconversion between the open-gate and close-gate conformations leads to a dynamic regulation of the 20S proteasome proteolysis activity. Functionally, component of the proteasome core, a large protease complex with broad specificity involved in protein degradation. The protein is Proteasome subunit beta 2 of Saccharolobus solfataricus (strain 98/2) (Sulfolobus solfataricus).